An 86-amino-acid polypeptide reads, in one-letter code: uncharacterized protein (86 aa).

It to M.jannaschii MJ0526.1.

This is an uncharacterized protein from Methanothermobacter thermautotrophicus (strain ATCC 29096 / DSM 1053 / JCM 10044 / NBRC 100330 / Delta H) (Methanobacterium thermoautotrophicum).